A 427-amino-acid chain; its full sequence is Enolase (427 aa).

Position 163 (Gln163) interacts with (2R)-2-phosphoglycerate. Residue Glu205 is the Proton donor of the active site. Positions 242, 287, and 314 each coordinate Mg(2+). 4 residues coordinate (2R)-2-phosphoglycerate: Lys339, Arg368, Ser369, and Lys390. Residue Lys339 is the Proton acceptor of the active site.

The protein belongs to the enolase family. Requires Mg(2+) as cofactor.

It localises to the cytoplasm. It is found in the secreted. The protein resides in the cell surface. The enzyme catalyses (2R)-2-phosphoglycerate = phosphoenolpyruvate + H2O. It functions in the pathway carbohydrate degradation; glycolysis; pyruvate from D-glyceraldehyde 3-phosphate: step 4/5. Its function is as follows. Catalyzes the reversible conversion of 2-phosphoglycerate (2-PG) into phosphoenolpyruvate (PEP). It is essential for the degradation of carbohydrates via glycolysis. The sequence is that of Enolase from Solibacter usitatus (strain Ellin6076).